A 137-amino-acid polypeptide reads, in one-letter code: Large ribosomal subunit protein uL16c (137 aa).

The disordered stretch occupies residues 1–21; that stretch reads MLSPKKTKYRKQHRGRMKGKA.

The protein belongs to the universal ribosomal protein uL16 family. In terms of assembly, part of the 50S ribosomal subunit.

The protein resides in the plastid. It is found in the chloroplast. The chain is Large ribosomal subunit protein uL16c from Oedogonium cardiacum (Filamentous green alga).